The chain runs to 175 residues: Large ribosomal subunit protein uL10 (175 aa).

This sequence belongs to the universal ribosomal protein uL10 family. As to quaternary structure, part of the ribosomal stalk of the 50S ribosomal subunit. The N-terminus interacts with L11 and the large rRNA to form the base of the stalk. The C-terminus forms an elongated spine to which L12 dimers bind in a sequential fashion forming a multimeric L10(L12)X complex.

In terms of biological role, forms part of the ribosomal stalk, playing a central role in the interaction of the ribosome with GTP-bound translation factors. The polypeptide is Large ribosomal subunit protein uL10 (Synechococcus sp. (strain WH7803)).